Reading from the N-terminus, the 513-residue chain is ATP synthase subunit alpha (513 aa).

An ATP-binding site is contributed by 169-176 (GDRQTGKT).

Belongs to the ATPase alpha/beta chains family. In terms of assembly, F-type ATPases have 2 components, CF(1) - the catalytic core - and CF(0) - the membrane proton channel. CF(1) has five subunits: alpha(3), beta(3), gamma(1), delta(1), epsilon(1). CF(0) has three main subunits: a(1), b(2) and c(9-12). The alpha and beta chains form an alternating ring which encloses part of the gamma chain. CF(1) is attached to CF(0) by a central stalk formed by the gamma and epsilon chains, while a peripheral stalk is formed by the delta and b chains.

It is found in the cell inner membrane. It carries out the reaction ATP + H2O + 4 H(+)(in) = ADP + phosphate + 5 H(+)(out). Its function is as follows. Produces ATP from ADP in the presence of a proton gradient across the membrane. The alpha chain is a regulatory subunit. In Klebsiella pneumoniae (strain 342), this protein is ATP synthase subunit alpha.